A 127-amino-acid polypeptide reads, in one-letter code: UPF0102 protein Mmwyl1_2395 (127 aa).

It belongs to the UPF0102 family.

This Marinomonas sp. (strain MWYL1) protein is UPF0102 protein Mmwyl1_2395.